Here is a 218-residue protein sequence, read N- to C-terminus: MPMTLGYWDIRGLAHAIRLLLEYTDTSYEDKKYTMGDAPDYDRSQWLSEKFKLGLDFPNLPYLIDGSHKITQSNAILRYLARKHNLCGETEEERIRVDILENQAMDTRIQLAMVCYSPDFEKKKPEYLEGLPEKMKLYSEFLGKQPWFAGNKVTYVDFLVYDVLDQHRIFEPKCLDAFPNLKDFMGRFEGLKKISDYMKSSRFLSKPIFAKMAFWNPK.

The 87-residue stretch at 2 to 88 (PMTLGYWDIR…YLARKHNLCG (87 aa)) folds into the GST N-terminal domain. 7–8 (YW) is a glutathione binding site. 2 positions are modified to phosphoserine: Ser27 and Ser44. Residues 43–46 (RSQW), Lys50, 59–60 (NL), and 72–73 (QS) contribute to the glutathione site. The 119-residue stretch at 90-208 (TEEERIRVDI…KSSRFLSKPI (119 aa)) folds into the GST C-terminal domain. Residue Tyr116 participates in substrate binding. At Ser117 the chain carries Phosphoserine.

Belongs to the GST superfamily. Mu family. In terms of assembly, homodimer.

It is found in the cytoplasm. The enzyme catalyses RX + glutathione = an S-substituted glutathione + a halide anion + H(+). It carries out the reaction 11(S)-hydroxy-14(S),15(S)-epoxy-(5Z,8Z,12E)-eicosatrienoate + glutathione = (11S,15S)-dihydroxy-14(R)-S-glutathionyl-(5Z,8Z,12E)-eicosatrienoate. In terms of biological role, conjugation of reduced glutathione to a wide number of exogenous and endogenous hydrophobic electrophiles. Participates in the formation of novel hepoxilin regioisomers. The protein is Glutathione S-transferase Mu 2 of Mus musculus (Mouse).